A 644-amino-acid chain; its full sequence is DNA mismatch repair protein MutL (644 aa).

Disordered stretches follow at residues 353–399 (SESG…SQLT) and 420–440 (GSMAVPRESRSGPTGESRARA). Over residues 370–381 (SPESKTHSTWNE) the composition is skewed to polar residues. Basic and acidic residues predominate over residues 383 to 399 (SRVDTSRVEISRDSQLT).

It belongs to the DNA mismatch repair MutL/HexB family.

Its function is as follows. This protein is involved in the repair of mismatches in DNA. It is required for dam-dependent methyl-directed DNA mismatch repair. May act as a 'molecular matchmaker', a protein that promotes the formation of a stable complex between two or more DNA-binding proteins in an ATP-dependent manner without itself being part of a final effector complex. The sequence is that of DNA mismatch repair protein MutL from Shewanella sp. (strain MR-4).